A 95-amino-acid polypeptide reads, in one-letter code: Suppressor of silencing 2b (95 aa).

The homotetramerization stretch occupies residues 8–18 (LHEIIRKLERM). Residues 8-40 (LHEIIRKLERMNQKKQAQRKRHKLNRKERGHKS) adopt a coiled-coil conformation. Positions 16–49 (ERMNQKKQAQRKRHKLNRKERGHKSPSEQRRSEL) are disordered. Over residues 23-37 (QAQRKRHKLNRKERG) the composition is skewed to basic residues. A Nuclear localization signal motif is present at residues 26–30 (RKRHK). The span at 38-49 (HKSPSEQRRSEL) shows a compositional bias: basic and acidic residues.

The protein belongs to the cucumovirus/ilarvirus protein 2b family. In terms of assembly, homodimer. Homotetramer (dimer of dimers).

Its subcellular location is the host nucleus. In terms of biological role, acts as a suppressor of RNA-mediated gene silencing, also known as post-transcriptional gene silencing (PTGS), a mechanism of plant viral defense that limits the accumulation of viral RNAs. Forms a homodimer to measure siRNA duplex in a length-preference mode. Binds to both siRNA duplexes (19bp) and long siRNA duplexes (30bp). The protein is Suppressor of silencing 2b of Canna (Florist's daisy).